Here is a 33-residue protein sequence, read N- to C-terminus: Ice-structuring protein GS-5 (33 aa).

Met1 is subject to Blocked amino end (Met).

The protein belongs to the type-I AFP family.

Its function is as follows. Antifreeze proteins lower the blood freezing point. The chain is Ice-structuring protein GS-5 from Myoxocephalus aenaeus (Grubby sculpin).